A 141-amino-acid polypeptide reads, in one-letter code: Hemoglobin subunit alpha-3 (141 aa).

An N-acetylserine modification is found at serine 1. One can recognise a Globin domain in the interval 1-141 (SLSASEKAAV…VSAVLTSKYR (141 aa)). Histidine 58 is an O2 binding site. Position 87 (histidine 87) interacts with heme b.

Belongs to the globin family. In terms of assembly, heterotetramer of two alpha chains and two beta chains. Red blood cells.

This is a tadpole (larval) alpha chain. In Aquarana catesbeiana (American bullfrog), this protein is Hemoglobin subunit alpha-3.